The sequence spans 95 residues: Co-chaperonin GroES (95 aa).

Belongs to the GroES chaperonin family. As to quaternary structure, heptamer of 7 subunits arranged in a ring. Interacts with the chaperonin GroEL.

It is found in the cytoplasm. In terms of biological role, together with the chaperonin GroEL, plays an essential role in assisting protein folding. The GroEL-GroES system forms a nano-cage that allows encapsulation of the non-native substrate proteins and provides a physical environment optimized to promote and accelerate protein folding. GroES binds to the apical surface of the GroEL ring, thereby capping the opening of the GroEL channel. This Xylella fastidiosa (strain M12) protein is Co-chaperonin GroES.